We begin with the raw amino-acid sequence, 84 residues long: MVCLPCIFLPIMMAIYMKFIMPYVYRVLPQRWVNFLDPILYPTCPVKIPEPENKKEVEEEKKDAPCCANTTEATVETVETKKDQ.

The chain crosses the membrane as a helical span at residues 1–21 (MVCLPCIFLPIMMAIYMKFIM).

It belongs to the UPF0729 family.

The protein localises to the cell membrane. This chain is UPF0729 protein F18A11.3, found in Caenorhabditis elegans.